A 257-amino-acid polypeptide reads, in one-letter code: Imidazole glycerol phosphate synthase subunit HisF (257 aa).

Catalysis depends on residues aspartate 12 and aspartate 131.

The protein belongs to the HisA/HisF family. Heterodimer of HisH and HisF.

Its subcellular location is the cytoplasm. The enzyme catalyses 5-[(5-phospho-1-deoxy-D-ribulos-1-ylimino)methylamino]-1-(5-phospho-beta-D-ribosyl)imidazole-4-carboxamide + L-glutamine = D-erythro-1-(imidazol-4-yl)glycerol 3-phosphate + 5-amino-1-(5-phospho-beta-D-ribosyl)imidazole-4-carboxamide + L-glutamate + H(+). It participates in amino-acid biosynthesis; L-histidine biosynthesis; L-histidine from 5-phospho-alpha-D-ribose 1-diphosphate: step 5/9. Functionally, IGPS catalyzes the conversion of PRFAR and glutamine to IGP, AICAR and glutamate. The HisF subunit catalyzes the cyclization activity that produces IGP and AICAR from PRFAR using the ammonia provided by the HisH subunit. The polypeptide is Imidazole glycerol phosphate synthase subunit HisF (Burkholderia pseudomallei (strain 1106a)).